A 427-amino-acid chain; its full sequence is Histidine--tRNA ligase (427 aa).

It belongs to the class-II aminoacyl-tRNA synthetase family. Homodimer.

It is found in the cytoplasm. The enzyme catalyses tRNA(His) + L-histidine + ATP = L-histidyl-tRNA(His) + AMP + diphosphate + H(+). The chain is Histidine--tRNA ligase from Proteus mirabilis (strain HI4320).